The following is a 526-amino-acid chain: DNA polymerase epsilon subunit B (526 aa).

Belongs to the DNA polymerase epsilon subunit B family. As to quaternary structure, subunit of the DNA polymerase II. Interacts with POL2A (via C-terminus).

The protein localises to the nucleus. Its function is as follows. As accessory component of DNA polymerase II participates in chromosomal DNA replication. Required for the timing and determination of cell fate during plant embryogenesis and root pole development, by promoting cell cycle and cell type patterning. Necessary for proper shoot (SAM) and root apical meristem (RAM) functions. Is essential to promote the first divisions of the zygote. This Arabidopsis thaliana (Mouse-ear cress) protein is DNA polymerase epsilon subunit B.